A 164-amino-acid chain; its full sequence is UPF0262 protein Nham_0287 (164 aa).

This sequence belongs to the UPF0262 family.

In Nitrobacter hamburgensis (strain DSM 10229 / NCIMB 13809 / X14), this protein is UPF0262 protein Nham_0287.